The primary structure comprises 744 residues: Tripartite motif-containing protein 2 (744 aa).

Serine 10 bears the Phosphoserine mark. Residues 23–64 (CSICLERYKNPKVLPCLHTFCERCLQNYIPAHSLTLSCPVCR) form an RING-type zinc finger. The B box-type zinc-finger motif lies at 113 to 154 (GKPLSCPNHDGNVMEFYCQSCETAMCRECTEGEHAEHPTVPL). The Zn(2+) site is built by cysteine 118, histidine 121, cysteine 141, and histidine 146. Residues 320-421 (TTNAVASETV…IRGSPFKLKV (102 aa)) form a Filamin repeat. A Phosphothreonine modification is found at threonine 371. Serine 375, serine 424, and serine 428 each carry phosphoserine. Residues 432–462 (EGVKRRVKSPGSGHVKQKAVKRPASMYSTGK) form a disordered region. NHL repeat units lie at residues 473 to 516 (IFRV…FSND), 520 to 563 (KSRF…FSND), 564 to 605 (GKFK…FQPN), 609 to 652 (VTRF…FNQE), 656 to 699 (MLKF…FDGS), and 700 to 743 (GSFL…YRYL).

The protein belongs to the TRIM/RBCC family. In terms of assembly, forms homooligomers. Interacts with TRIM3; this interaction reduces TRIM2 activity. Interacts with myosin V; myosin V may not be a substrate for ubiquitination. Interacts with NEFL. Interacts with phosphorylated BCL2L11. Interacts with SIRPA. Post-translationally, RING-type zinc finger-dependent and UBE2D1-dependent autoubiquitination.

The enzyme catalyses S-ubiquitinyl-[E2 ubiquitin-conjugating enzyme]-L-cysteine + [acceptor protein]-L-lysine = [E2 ubiquitin-conjugating enzyme]-L-cysteine + N(6)-ubiquitinyl-[acceptor protein]-L-lysine.. It participates in protein modification; protein ubiquitination. Its function is as follows. UBE2D1-dependent E3 ubiquitin-protein ligase that mediates the ubiquitination of NEFL and of phosphorylated BCL2L11. Plays a neuroprotective function. May play a role in neuronal rapid ischemic tolerance. Plays a role in antiviral immunity and limits New World arenavirus infection independently of its ubiquitin ligase activity. The chain is Tripartite motif-containing protein 2 (Trim2) from Rattus norvegicus (Rat).